The sequence spans 288 residues: 2-hydroxy-6-oxononadienedioate/2-hydroxy-6-oxononatrienedioate hydrolase (288 aa).

His267 acts as the Proton acceptor in catalysis.

It belongs to the AB hydrolase superfamily. MhpC family. As to quaternary structure, homodimer.

The enzyme catalyses (2Z,4E)-2-hydroxy-6-oxonona-2,4-dienedioate + H2O = (2Z)-2-hydroxypenta-2,4-dienoate + succinate + H(+). It catalyses the reaction (2Z,4E,7E)-2-hydroxy-6-oxonona-2,4,7-trienedioate + H2O = (2Z)-2-hydroxypenta-2,4-dienoate + fumarate + H(+). The protein operates within aromatic compound metabolism; 3-phenylpropanoate degradation. Catalyzes the cleavage of the C5-C6 bond of 2-hydroxy-6-oxononadienedioate and 2-hydroxy-6-oxononatrienedioate, a dienol ring fission product of the bacterial meta-cleavage pathway for degradation of phenylpropionic acid. The sequence is that of 2-hydroxy-6-oxononadienedioate/2-hydroxy-6-oxononatrienedioate hydrolase from Escherichia coli O81 (strain ED1a).